Reading from the N-terminus, the 821-residue chain is Palmitoyltransferase AKR1 (821 aa).

The disordered stretch occupies residues 1-118; the sequence is MVDKDANNEL…KDTASRKSMD (118 aa). Residues 1-400 lie on the Cytoplasmic side of the membrane; that stretch reads MVDKDANNEL…TIYLNPKIGK (400 aa). The span at 93–117 shows a compositional bias: basic and acidic residues; it reads IQDESVNDKTSEPDENKDTASRKSM. ANK repeat units lie at residues 142 to 172, 176 to 205, 213 to 243, 247 to 277, 289 to 318, and 322 to 351; these read PSLH…KAND, DGIT…SKAD, LKAS…DPTL, QSYN…STST, CDRT…DVSK, and NLFI…NIFA. A helical transmembrane segment spans residues 401 to 421; the sequence is LVTFFTPYIILPIMFQVCSFY. Position 422 (asparagine 422) is a topological domain, lumenal. The chain crosses the membrane as a helical span at residues 423-443; it reads GFVIPKLFFSVVLFAGSIYIL. Over 444–463 the chain is Cytoplasmic; sequence QKLVIPTYLAEEKAIPKSPL. Residues 464–484 traverse the membrane as a helical segment; sequence LAGIFSGTAFWCIVTWAFNII. The Lumenal segment spans residues 485–494; that stretch reads PTLLFKKFIS. Residues 495–515 traverse the membrane as a helical segment; the sequence is NLVLSAFIYLFVWSFFKAMFI. At 516-589 the chain is on the cytoplasmic side; sequence NPGYVPVPSD…YNDIGVRNHK (74 aa). The DHHC domain occupies 546 to 596; sequence NFCVNTFVRKPLRSKYSRFNKKLIARFDHYCPWVYNDIGVRNHKLFVVFVY. Cysteine 576 (S-palmitoyl cysteine intermediate) is an active-site residue. Residues 590-610 traverse the membrane as a helical segment; sequence LFVVFVYSLNLAVLLFTHLSI. Residues 611–650 are Lumenal-facing; sequence KLFKNTEKMSGYDSDDESQKCWLLSDELCVGYKSHHFQFN. The chain crosses the membrane as a helical span at residues 651–671; that stretch reads LMLWCLIQYIWIAFLCLVQTF. Topologically, residues 672 to 821 are cytoplasmic; it reads QILKGLTTWE…YPPKLADVDA (150 aa).

The protein belongs to the DHHC palmitoyltransferase family. AKR/ZDHHC17 subfamily.

It localises to the early endosome membrane. Its subcellular location is the golgi apparatus membrane. It catalyses the reaction L-cysteinyl-[protein] + hexadecanoyl-CoA = S-hexadecanoyl-L-cysteinyl-[protein] + CoA. Functionally, palmitoyltransferase specific for casein kinase 1. In Debaryomyces hansenii (strain ATCC 36239 / CBS 767 / BCRC 21394 / JCM 1990 / NBRC 0083 / IGC 2968) (Yeast), this protein is Palmitoyltransferase AKR1 (AKR1).